The following is a 253-amino-acid chain: Peptidase inhibitor R3HDML (253 aa).

The signal sequence occupies residues 1–24; that stretch reads MPLLPSTVGLAGLLFWAGQAVNAL. Residues 25 to 56 constitute a propeptide that is removed on maturation; that stretch reads IMPNATPAPAQPESTAMRLLSGLEVPRYRRKR. Residues 67 to 207 enclose the SCP domain; it reads LDYHNHIRAS…HRAAYLVCNY (141 aa). Asn120 carries an N-linked (GlcNAc...) asparagine glycan.

This sequence belongs to the CRISP family.

It is found in the secreted. Putative serine protease inhibitor. This Homo sapiens (Human) protein is Peptidase inhibitor R3HDML (R3HDML).